We begin with the raw amino-acid sequence, 575 residues long: Proline--tRNA ligase (575 aa).

This sequence belongs to the class-II aminoacyl-tRNA synthetase family. ProS type 1 subfamily. As to quaternary structure, homodimer.

The protein localises to the cytoplasm. It carries out the reaction tRNA(Pro) + L-proline + ATP = L-prolyl-tRNA(Pro) + AMP + diphosphate. Catalyzes the attachment of proline to tRNA(Pro) in a two-step reaction: proline is first activated by ATP to form Pro-AMP and then transferred to the acceptor end of tRNA(Pro). As ProRS can inadvertently accommodate and process non-cognate amino acids such as alanine and cysteine, to avoid such errors it has two additional distinct editing activities against alanine. One activity is designated as 'pretransfer' editing and involves the tRNA(Pro)-independent hydrolysis of activated Ala-AMP. The other activity is designated 'posttransfer' editing and involves deacylation of mischarged Ala-tRNA(Pro). The misacylated Cys-tRNA(Pro) is not edited by ProRS. The sequence is that of Proline--tRNA ligase from Heliobacterium modesticaldum (strain ATCC 51547 / Ice1).